We begin with the raw amino-acid sequence, 357 residues long: Protein FAM118A (357 aa).

Met-1 is modified (N-acetylmethionine). A helical transmembrane segment spans residues 30–46 (LLLVIGTGVSAAVAPGI). Ser-311 carries the post-translational modification Phosphoserine.

Belongs to the FAM118 family.

The protein resides in the membrane. The polypeptide is Protein FAM118A (Fam118a) (Mus musculus (Mouse)).